Consider the following 273-residue polypeptide: NAD-dependent protein deacylase (273 aa).

The 269-residue stretch at Met-1 to Ile-269 folds into the Deacetylase sirtuin-type domain. NAD(+)-binding positions include Gly-25–Trp-44 and Gln-107–Asp-110. Residue His-125 is the Proton acceptor of the active site. The Zn(2+) site is built by Cys-133, Cys-136, Cys-173, and Cys-176. NAD(+) contacts are provided by residues Gly-211–Ser-213, Asn-237–Asn-239, and Thr-255.

Belongs to the sirtuin family. Class III subfamily. Requires Zn(2+) as cofactor.

It localises to the cytoplasm. It catalyses the reaction N(6)-acetyl-L-lysyl-[protein] + NAD(+) + H2O = 2''-O-acetyl-ADP-D-ribose + nicotinamide + L-lysyl-[protein]. In terms of biological role, NAD-dependent protein deacetylase which modulates the activities of several proteins which are inactive in their acetylated form. The polypeptide is NAD-dependent protein deacylase (cobB) (Desulfosudis oleivorans (strain DSM 6200 / JCM 39069 / Hxd3) (Desulfococcus oleovorans)).